Consider the following 82-residue polypeptide: Diphthamide biosynthesis protein 3 (82 aa).

Residues 4-60 (FHDEVEIEDFQYDEDSETYFYPCPCGDNFAITKEDLENGEDVATCPSCSLIIKVIYD) form the DPH-type MB domain. Fe cation-binding residues include Cys26, Cys28, Cys48, and Cys51.

This sequence belongs to the DPH3 family. Component of the 2-(3-amino-3-carboxypropyl)histidine synthase complex composed of DPH1, DPH2, DPH3 and a NADH-dependent reductase. Interacts with SERGEF. Fe(2+) serves as cofactor. In terms of tissue distribution, widely expressed with highest levels in heart, liver, kidney and testis.

Its subcellular location is the cytoplasm. It is found in the nucleus. The catalysed reaction is [3Fe-4S](1+)-[protein] + Fe(2+)-[Dph3] = [3Fe-4S](0)-[protein] + Fe(3+)-[Dph3]. It catalyses the reaction 2 [3Fe-4S](0)-[protein] + 2 Fe(2+)-[Dph3] + NADH = 2 [4Fe-4S](1+)-[protein] + 2 [Dph3] + NAD(+) + H(+). It functions in the pathway protein modification; peptidyl-diphthamide biosynthesis. Its function is as follows. Required for the first step of diphthamide biosynthesis, a post-translational modification of histidine which occurs in elongation factor 2. DPH1 and DPH2 transfer a 3-amino-3-carboxypropyl (ACP) group from S-adenosyl-L-methionine (SAM) to a histidine residue, the reaction is assisted by a reduction system comprising DPH3 and a NADH-dependent reductase. Acts as an electron donor to reduce the Fe-S cluster in DPH1-DPH2 keeping the [4Fe-4S] clusters in the active and reduced state. Restores iron to DPH1-DPH2 iron-sulfur clusters which have degraded from [4Fe-4S] to [3Fe-4S] by donating an iron atom to reform [4Fe-4S] clusters, in a manner dependent on the presence of elongation factor 2 and SAM. Associates with the elongator complex and is required for tRNA Wobble base modifications mediated by the elongator complex. The elongator complex is required for multiple tRNA modifications, including mcm5U (5-methoxycarbonylmethyl uridine), mcm5s 2U (5-methoxycarbonylmethyl-2-thiouridine), and ncm5U (5-carbamoylmethyl uridine). This is Diphthamide biosynthesis protein 3 from Mus musculus (Mouse).